The following is a 299-amino-acid chain: Maintenance of mitochondrial morphology protein 1 (299 aa).

Residues 1–15 (MTNIIFSLQPTFTQG) are Lumenal-facing. Residues 16–36 (LILGQLSVLVLLGLILKYLFL) traverse the membrane as a helical segment. Residues 37 to 299 (DSTKNPFETT…QEESKRQEEA (263 aa)) are Cytoplasmic-facing. The interval 47-68 (SYHPQFDRKPARKQQAQDSQSQ) is disordered. The SMP-LTD domain maps to 73 to 281 (DVESLDWFNL…LPGLASVAEA (209 aa)).

This sequence belongs to the MMM1 family. Homodimer. Component of the ER-mitochondria encounter structure (ERMES) or MDM complex, composed of MMM1, MDM10, MDM12 and MDM34. An MMM1 homodimer associates with one molecule of MDM12 on each side in a pairwise head-to-tail manner, and the SMP-LTD domains of MMM1 and MDM12 generate a continuous hydrophobic tunnel for phospholipid trafficking.

The protein resides in the endoplasmic reticulum membrane. Functionally, component of the ERMES/MDM complex, which serves as a molecular tether to connect the endoplasmic reticulum (ER) and mitochondria. Components of this complex are involved in the control of mitochondrial shape and protein biogenesis, and function in nonvesicular lipid trafficking between the ER and mitochondria. The MDM12-MMM1 subcomplex functions in the major beta-barrel assembly pathway that is responsible for biogenesis of all outer membrane beta-barrel proteins, and acts in a late step after the SAM complex. The MDM10-MDM12-MMM1 subcomplex further acts in the TOM40-specific pathway after the action of the MDM12-MMM1 complex. Essential for establishing and maintaining the structure of mitochondria and maintenance of mtDNA nucleoids. The sequence is that of Maintenance of mitochondrial morphology protein 1 from Coprinopsis cinerea (strain Okayama-7 / 130 / ATCC MYA-4618 / FGSC 9003) (Inky cap fungus).